Here is a 28-residue protein sequence, read N- to C-terminus: Aspartate aminotransferase, mitochondrial (28 aa).

This sequence belongs to the class-I pyridoxal-phosphate-dependent aminotransferase family. In terms of assembly, homodimer. Pyridoxal 5'-phosphate is required as a cofactor.

It localises to the mitochondrion matrix. It carries out the reaction L-aspartate + 2-oxoglutarate = oxaloacetate + L-glutamate. Plays a key role in amino acid metabolism. Important for metabolite exchange between mitochondria and cytosol. This chain is Aspartate aminotransferase, mitochondrial, found in Catharanthus roseus (Madagascar periwinkle).